The chain runs to 1214 residues: Neuronal cell adhesion molecule (1214 aa).

Positions 1-29 (MQLKTMPKKKPLSAGRAPLFLFLCQMISA) are cleaved as a signal peptide. The Extracellular portion of the chain corresponds to 30–1077 (LDVPLDPKLL…ASRQVDIATQ (1048 aa)). Ig-like C2-type domains lie at 46–134 (PTIT…AAVS) and 141–235 (PSRS…QPIS). 2 disulfides stabilise this stretch: Cys-68–Cys-123 and Cys-167–Cys-218. An N-linked (GlcNAc...) asparagine glycan is attached at Asn-83. N-linked (GlcNAc...) asparagine glycans are attached at residues Asn-223, Asn-245, Asn-251, Asn-276, Asn-314, and Asn-377. Ig-like C2-type domains lie at 267-356 (PPTF…ISVT), 361-448 (PYWI…AFVN), 454-541 (PRIL…VHLE), and 545-626 (PTRF…DSVS). An intrachain disulfide couples Cys-292 to Cys-340. Cysteines 382 and 432 form a disulfide. Residues Asn-433 and Asn-507 are each glycosylated (N-linked (GlcNAc...) asparagine). Intrachain disulfides connect Cys-476–Cys-525 and Cys-567–Cys-616. 7 N-linked (GlcNAc...) asparagine glycosylation sites follow: Asn-619, Asn-716, Asn-802, Asn-858, Asn-993, Asn-1009, and Asn-1019. 4 consecutive Fibronectin type-III domains span residues 649-744 (PPFD…TKAA), 746-843 (PDQN…SGED), 848-950 (APGN…TPEG), and 954-1051 (APSS…VDEG). Residues 1078 to 1100 (GWFIGLMCAVALLILILLIVCFI) form a helical membrane-spanning segment. The Cytoplasmic segment spans residues 1101-1214 (RRNKGGKYPV…SPVNAMNSFV (114 aa)). Residues 1109–1129 (PVKEKEDAHADPEIQPMKEDD) show a composition bias toward basic and acidic residues. The interval 1109-1214 (PVKEKEDAHA…SPVNAMNSFV (106 aa)) is disordered. At Thr-1131 the chain carries Phosphothreonine. Tyr-1135 carries the phosphotyrosine modification. Ser-1136 is modified (phosphoserine). Residues 1151-1160 (PSDRTVKKED) are compositionally biased toward basic and acidic residues. Ser-1161, Ser-1164, Ser-1181, Ser-1200, Ser-1201, and Ser-1205 each carry phosphoserine. Positions 1198–1214 (NESSEAPSPVNAMNSFV) are enriched in polar residues.

This sequence belongs to the immunoglobulin superfamily. L1/neurofascin/NgCAM family. In terms of assembly, constituent of a NFASC/NRCAM/ankyrin-G complex. Detected in a complex with CNTN1 and PTPRB. Interacts with MYOC. Interacts with GLDN. In terms of tissue distribution, detected in cerebellum Purkinje cells. Detected on nodes of Ranvier and unmyelinated axons in sciatic nerve (at protein level).

It localises to the cell membrane. Its subcellular location is the cell projection. The protein localises to the axon. The protein resides in the secreted. Its function is as follows. Cell adhesion protein that is required for normal responses to cell-cell contacts in brain and in the peripheral nervous system. Plays a role in neurite outgrowth in response to contactin binding. Plays a role in mediating cell-cell contacts between Schwann cells and axons. Plays a role in the formation and maintenance of the nodes of Ranvier on myelinated axons. Nodes of Ranvier contain clustered sodium channels that are crucial for the saltatory propagation of action potentials along myelinated axons. During development, nodes of Ranvier are formed by the fusion of two heminodes. Required for normal clustering of sodium channels at heminodes; not required for the formation of mature nodes with normal sodium channel clusters. Required, together with GLDN, for maintaining NFASC and sodium channel clusters at mature nodes of Ranvier. The sequence is that of Neuronal cell adhesion molecule (Nrcam) from Rattus norvegicus (Rat).